The primary structure comprises 693 residues: Homeobox protein caupolican (693 aa).

Disordered regions lie at residues 20 to 104 (TANT…PSRG), 288 to 331 (NKMT…PGNQ), 387 to 453 (AQSH…DCGI), 480 to 538 (YLGQ…PLSM), 561 to 627 (MHLP…SMHS), and 648 to 693 (YGHG…RSGS). A compositionally biased stretch (low complexity) spans 41 to 59 (ASLSPSGGSTATGLTAGPL). Positions 226–288 (LAARRKNATR…NARRRLKKEN (63 aa)) form a DNA-binding region, homeobox; TALE-type. Composition is skewed to basic and acidic residues over residues 288–298 (NKMTWEPKNKT) and 308–317 (DDEKEKDAGD). Composition is skewed to low complexity over residues 397-419 (HPQQ…QLQH) and 493-515 (QQLP…QQQQ). Over residues 516–527 (QHHHHPHHHHPH) the composition is skewed to basic residues. Low complexity predominate over residues 609-627 (SSGGSSSSSGSSHSSSMHS). Residues 651 to 675 (GHSHGHGHGHGHGLGHGHGLGHGHG) show a composition bias toward basic residues.

The protein belongs to the TALE/IRO homeobox family.

It is found in the nucleus. Functionally, controls proneural and vein forming genes. Positive transcriptional controller of ac-sc (achaete-scute). May act as an activator that interacts with the transcriptional complex assembled on the ac and sc promoters and participates in transcription initiation. The sequence is that of Homeobox protein caupolican (caup) from Drosophila melanogaster (Fruit fly).